Here is a 198-residue protein sequence, read N- to C-terminus: Fucoxanthin-chlorophyll a-c binding protein B, chloroplastic (198 aa).

A chloroplast-targeting transit peptide spans 1–31; sequence MKFTVFASLFASAAAFAPAQQAARTSVATNM. The next 3 helical transmembrane spans lie at 73-94, 114-134, and 174-196; these read ISMLAVAGYLAQEAGWRLGGDI, IPQAGLIQIIAFIGFLETSVM, and GRAAQMGILALMVHEQLGVNILP.

Belongs to the fucoxanthin chlorophyll protein family. The LHC complex of chromophytic algae is composed of fucoxanthin, chlorophyll A and C bound non-covalently by fucoxanthin chlorophyll proteins (FCPs). The ratio of the pigments in LHC; fucoxanthin: chlorophyll C: chlorophyll A; (0.6-1): (0.1-0.3): (1).

The protein localises to the plastid. It is found in the chloroplast thylakoid membrane. The light-harvesting complex (LHC) functions as a light receptor, it captures and delivers excitation energy to photosystems with which it is closely associated. Energy is transferred from the carotenoid and chlorophyll C (or B) to chlorophyll A and the photosynthetic reaction centers where it is used to synthesize ATP and reducing power. In Phaeodactylum tricornutum (Diatom), this protein is Fucoxanthin-chlorophyll a-c binding protein B, chloroplastic (FCPB).